A 263-amino-acid chain; its full sequence is Linear gramicidin dehydrogenase LgrE (263 aa).

The active site involves serine 96.

This sequence belongs to the thioesterase family.

In terms of biological role, in the final step of gramicidin biosynthesis, reduces the pentadecapeptide-aldehyde intermediate, that is released from the terminal module of the non-ribosomal peptide synthetase LgrD, to the final product ethanolamine-containing gramicidin. This is Linear gramicidin dehydrogenase LgrE (lgrE) from Brevibacillus parabrevis.